The chain runs to 308 residues: Methionyl-tRNA formyltransferase (308 aa).

109 to 112 lines the (6S)-5,6,7,8-tetrahydrofolate pocket; that stretch reads SLLP.

This sequence belongs to the Fmt family.

It carries out the reaction L-methionyl-tRNA(fMet) + (6R)-10-formyltetrahydrofolate = N-formyl-L-methionyl-tRNA(fMet) + (6S)-5,6,7,8-tetrahydrofolate + H(+). Attaches a formyl group to the free amino group of methionyl-tRNA(fMet). The formyl group appears to play a dual role in the initiator identity of N-formylmethionyl-tRNA by promoting its recognition by IF2 and preventing the misappropriation of this tRNA by the elongation apparatus. In Salinispora arenicola (strain CNS-205), this protein is Methionyl-tRNA formyltransferase.